A 124-amino-acid chain; its full sequence is Glycine cleavage system H protein (124 aa).

A Lipoyl-binding domain is found at 19-101 (VATVGITNHA…EGEGWLFKME (83 aa)). K60 is modified (N6-lipoyllysine).

Belongs to the GcvH family. As to quaternary structure, the glycine cleavage system is composed of four proteins: P, T, L and H. (R)-lipoate serves as cofactor.

In terms of biological role, the glycine cleavage system catalyzes the degradation of glycine. The H protein shuttles the methylamine group of glycine from the P protein to the T protein. This chain is Glycine cleavage system H protein, found in Thermotoga maritima (strain ATCC 43589 / DSM 3109 / JCM 10099 / NBRC 100826 / MSB8).